Here is a 396-residue protein sequence, read N- to C-terminus: uncharacterized protein (396 aa).

This is an uncharacterized protein from Psittacid herpesvirus 1 (isolate Amazon parrot/-/97-0001/1997) (PsHV-1).